The sequence spans 467 residues: 5-phosphohydroxy-L-lysine phospho-lyase (467 aa).

At Lys278 the chain carries N6-(pyridoxal phosphate)lysine.

This sequence belongs to the class-III pyridoxal-phosphate-dependent aminotransferase family. Homotetramer. Pyridoxal 5'-phosphate serves as cofactor.

The protein resides in the mitochondrion. The enzyme catalyses (5R)-5-phosphooxy-L-lysine + H2O = (S)-2-amino-6-oxohexanoate + NH4(+) + phosphate. Its function is as follows. Catalyzes the pyridoxal-phosphate-dependent breakdown of 5-phosphohydroxy-L-lysine, converting it to ammonia, inorganic phosphate and 2-aminoadipate semialdehyde. The protein is 5-phosphohydroxy-L-lysine phospho-lyase (Phykpl) of Mus musculus (Mouse).